Consider the following 322-residue polypeptide: Ferredoxin--NADP reductase (322 aa).

Positions 34, 42, 47, 87, 120, 279, and 320 each coordinate FAD.

The protein belongs to the ferredoxin--NADP reductase type 2 family. As to quaternary structure, homodimer. FAD serves as cofactor.

The enzyme catalyses 2 reduced [2Fe-2S]-[ferredoxin] + NADP(+) + H(+) = 2 oxidized [2Fe-2S]-[ferredoxin] + NADPH. In Streptococcus pneumoniae serotype 19F (strain G54), this protein is Ferredoxin--NADP reductase.